A 578-amino-acid polypeptide reads, in one-letter code: Interleukin-10 receptor subunit alpha (578 aa).

An N-terminal signal peptide occupies residues Met1–Ala21. Topologically, residues His22–Asn235 are extracellular. Residues Asn50, Asn74, Asn110, Asn154, Asn177, and Asn189 are each glycosylated (N-linked (GlcNAc...) asparagine). An intrachain disulfide couples Cys56 to Cys75. Residues Cys202 and Cys223 are joined by a disulfide bond. A helical transmembrane segment spans residues Val236 to Leu256. Over Gln257–Glu578 the chain is Cytoplasmic. Residues Leu313 to Glu436 form a disordered region. Residues Ser316–Glu332 are compositionally biased toward polar residues. The BTRC recognition motif signature appears at Asp318–Ser323. Positions Gly357–Gly371 are enriched in low complexity. Polar residues predominate over residues Pro377–Arg396.

The protein belongs to the type II cytokine receptor family. In terms of assembly, interacts with IL10. Interacts with IL10RB. Interacts (via its cytoplasmic domain) with JAK1 (via N-terminus). Interacts with BTRC; this interaction leads to IL10RA ubiquitination and subsequent degradation. Interacts with STAT3. As to quaternary structure, (Microbial infection) Interacts with human cytomegalovirus protein IL10. (Microbial infection) Interacts with Epstein-Barr virus protein IL10. In terms of processing, phosphorylated. Phosphorylation of the cytoplasmic tail induced STAT3 activation. Ubiquitinated by BTRC; ubiquitination leads to endocytosis and subsequent degradation of IL10RA. As to expression, primarily expressed in hematopoetic cells including B-cells, T-cells, NK cells, monocytes and macrophages. Not expressed in non-hematopoetic cells such as fibroblasts or endothelial cells.

The protein localises to the cell membrane. It localises to the cytoplasm. Functionally, cell surface receptor for the cytokine IL10 that participates in IL10-mediated anti-inflammatory functions, limiting excessive tissue disruption caused by inflammation. Upon binding to IL10, induces a conformational change in IL10RB, allowing IL10RB to bind IL10 as well. In turn, the heterotetrameric assembly complex, composed of two subunits of IL10RA and IL10RB, activates the kinases JAK1 and TYK2 that are constitutively associated with IL10RA and IL10RB respectively. These kinases then phosphorylate specific tyrosine residues in the intracellular domain in IL10RA leading to the recruitment and subsequent phosphorylation of STAT3. Once phosphorylated, STAT3 homodimerizes, translocates to the nucleus and activates the expression of anti-inflammatory genes. In addition, IL10RA-mediated activation of STAT3 inhibits starvation-induced autophagy. This Homo sapiens (Human) protein is Interleukin-10 receptor subunit alpha (IL10RA).